Reading from the N-terminus, the 255-residue chain is 3-deoxy-manno-octulosonate cytidylyltransferase (255 aa).

Belongs to the KdsB family.

Its subcellular location is the cytoplasm. The catalysed reaction is 3-deoxy-alpha-D-manno-oct-2-ulosonate + CTP = CMP-3-deoxy-beta-D-manno-octulosonate + diphosphate. It functions in the pathway nucleotide-sugar biosynthesis; CMP-3-deoxy-D-manno-octulosonate biosynthesis; CMP-3-deoxy-D-manno-octulosonate from 3-deoxy-D-manno-octulosonate and CTP: step 1/1. The protein operates within bacterial outer membrane biogenesis; lipopolysaccharide biosynthesis. Activates KDO (a required 8-carbon sugar) for incorporation into bacterial lipopolysaccharide in Gram-negative bacteria. The polypeptide is 3-deoxy-manno-octulosonate cytidylyltransferase (Saccharophagus degradans (strain 2-40 / ATCC 43961 / DSM 17024)).